The sequence spans 654 residues: Endoplasmic reticulum chaperone BiP (654 aa).

An N-terminal signal peptide occupies residues 1 to 18 (MKFTVVAAALLLLCAVRA). The segment at 1-80 (MKFTVVAAAL…EGERLIGDAA (80 aa)) is required for interaction with ELAPOR1. Residue 36-39 (GTTY) coordinates ATP. A Phosphoserine modification is found at Ser86. Lys96 is a binding site for ATP. At Lys125 the chain carries N6-acetyllysine. The nucleotide-binding (NBD) stretch occupies residues 125–280 (KPYIQVDIGG…KKKTGKDVRK (156 aa)). Tyr160 carries the post-translational modification 3'-nitrotyrosine. Lys213 carries the post-translational modification N6-acetyllysine. 227–229 (GGT) lines the ATP pocket. The residue at position 271 (Lys271) is an N6-acetyllysine. 293 to 300 (EKAKRALS) is a binding site for ATP. An N6-acetyllysine modification is found at Lys326. Residue Lys352 forms a Glycyl lysine isopeptide (Lys-Gly) (interchain with G-Cter in SUMO2) linkage. N6-acetyllysine; alternate is present on Lys353. A Glycyl lysine isopeptide (Lys-Gly) (interchain with G-Cter in SUMO1); alternate cross-link involves residue Lys353. 364–367 (GSTR) lines the ATP pocket. Positions 409 to 419 (QDTGDLVLLDV) are interdomain linker. The substrate-binding (SBD) stretch occupies residues 420–500 (CPLTLGIETV…PRGVPQIEVT (81 aa)). Lys447 bears the N6-succinyllysine mark. The residue at position 492 (Arg492) is an Omega-N-methylarginine. The residue at position 518 (Thr518) is an O-AMP-threonine; alternate. Thr518 is subject to Phosphothreonine; alternate. Lys585 bears the N6,N6,N6-trimethyllysine; by METTL21A; in vitro mark. Lys585 carries the post-translational modification N6,N6-dimethyllysine; alternate. Lys585 is subject to N6-methyllysine; alternate. Lys591 carries the post-translational modification N6-methyllysine. The disordered stretch occupies residues 631 to 654 (ISKLYGSGGPPPTGEEDTSEKDEL). 2 positions are modified to phosphothreonine: Thr643 and Thr648. Over residues 644–654 (GEEDTSEKDEL) the composition is skewed to acidic residues. At Ser649 the chain carries Phosphoserine. Residues 651–654 (KDEL) carry the Prevents secretion from ER motif.

The protein belongs to the heat shock protein 70 family. Monomer and homooligomer; homooligomerization via the interdomain linker inactivates the chaperone activity and acts as a storage of HSPA5/BiP molecules. Interacts with DNAJC1 (via J domain). Component of an EIF2 complex at least composed of CELF1/CUGBP1, CALR, CALR3, EIF2S1, EIF2S2, HSP90B1 and HSPA5. Part of a large chaperone multiprotein complex comprising DNAJB11, HSP90B1, HSPA5, HYOU, PDIA2, PDIA4, PDIA6, PPIB, SDF2L1, UGGT1 and very small amounts of ERP29, but not, or at very low levels, CALR nor CANX. Interacts with TMEM132A and TRIM21. May form a complex with ERLEC1, OS9, SEL1L and SYVN1. Interacts with DNAJC10. Interacts with DNAJB9/ERdj4; leading to recruit HSPA5/BiP to ERN1/IRE1. Interacts with ERN1/IRE1 (via luminal domain); the interaction takes place following interaction with DNAJB9/ERdj4 and leads to inactivate ERN1/IRE1, the interaction also competitively inhibits ERN1 interaction with MANF. Interacts directly with MANF (via SAP domain); the interaction inhibits ATP binding to HSPA5/BiP and subsequent nucleotide exchange. Interacts with EIF2AK3/PERK (via luminal domain); interaction leads to inactivate EIF2AK3/PERK. Interacts with MX1. Interacts with METTL23. Interacts with CEMIP; the interaction induces calcium leakage from the endoplasmic reticulum and cell migration. Interacts with PCSK4 form; the interaction takes place in the endoplasmic reticulum. Interacts with CIPC. Interacts with CCDC88B (via C-terminus); the interaction opposes ERN1-mediated JNK activation, protecting against apoptosis. Interacts with INPP5K; necessary for INPP5K localization at the endoplasmic reticulum. Interacts with MANF; the interaction is direct. Interacts with LOXL2; leading to activate the ERN1/IRE1-XBP1 pathway of the unfolded protein response. Interacts with CLU under stressed condition; interaction increases CLU protein stability; facilitates its retrotranslocation and redistribution to the mitochondria; cooperatively suppress stress-induced apoptosis by stabilizing mitochondrial membrane integrity. Interacts with CCDC47. Interacts with CLN3. Interacts with ELAPOR1; may regulate the function of HSPA5 in apoptosis and cell proliferation. Interacts with CASP7. Interacts with ILDR2; the interaction stabilizes ILDR2 expression. Interacts with ADAM7. In terms of processing, in unstressed cells, AMPylation at Thr-518 by FICD inactivates the chaperome activity: AMPylated form is locked in a relatively inert state and only weakly stimulated by J domain-containing proteins. In response to endoplasmic reticulum stress, de-AMPylation by the same protein, FICD, restores the chaperone activity.

Its subcellular location is the endoplasmic reticulum lumen. It localises to the melanosome. The protein resides in the cytoplasm. The protein localises to the cell surface. The catalysed reaction is ATP + H2O = ADP + phosphate + H(+). With respect to regulation, the chaperone activity is regulated by ATP-induced allosteric coupling of the nucleotide-binding (NBD) and substrate-binding (SBD) domains. In the ADP-bound and nucleotide-free (apo) states, the two domains have little interaction. In contrast, in the ATP-bound state the two domains are tightly coupled, which results in drastically accelerated kinetics in both binding and release of polypeptide substrates. J domain-containing co-chaperones (DNAJB9/ERdj4 or DNAJC10/ERdj5) stimulate the ATPase activity and are required for efficient substrate recognition by HSPA5/BiP. Homooligomerization inactivates participating HSPA5/BiP protomers and probably act as reservoirs to store HSPA5/BiP molecules when they are not needed by the cell. Its function is as follows. Endoplasmic reticulum chaperone that plays a key role in protein folding and quality control in the endoplasmic reticulum lumen. Involved in the correct folding of proteins and degradation of misfolded proteins via its interaction with DNAJC10/ERdj5, probably to facilitate the release of DNAJC10/ERdj5 from its substrate. Acts as a key repressor of the EIF2AK3/PERK and ERN1/IRE1-mediated unfolded protein response (UPR). In the unstressed endoplasmic reticulum, recruited by DNAJB9/ERdj4 to the luminal region of ERN1/IRE1, leading to disrupt the dimerization of ERN1/IRE1, thereby inactivating ERN1/IRE1. Also binds and inactivates EIF2AK3/PERK in unstressed cells. Accumulation of misfolded protein in the endoplasmic reticulum causes release of HSPA5/BiP from ERN1/IRE1 and EIF2AK3/PERK, allowing their homodimerization and subsequent activation. Plays an auxiliary role in post-translational transport of small presecretory proteins across endoplasmic reticulum (ER). May function as an allosteric modulator for SEC61 channel-forming translocon complex, likely cooperating with SEC62 to enable the productive insertion of these precursors into SEC61 channel. Appears to specifically regulate translocation of precursors having inhibitory residues in their mature region that weaken channel gating. May also play a role in apoptosis and cell proliferation. This chain is Endoplasmic reticulum chaperone BiP, found in Rattus norvegicus (Rat).